The primary structure comprises 418 residues: Trimethyllysine dioxygenase, mitochondrial (418 aa).

Residues His-239, Asp-241, and His-386 each coordinate Fe cation.

This sequence belongs to the gamma-BBH/TMLD family. Homodimer. It depends on Fe(2+) as a cofactor. L-ascorbate is required as a cofactor.

The protein localises to the mitochondrion matrix. It carries out the reaction N(6),N(6),N(6)-trimethyl-L-lysine + 2-oxoglutarate + O2 = (3S)-3-hydroxy-N(6),N(6),N(6)-trimethyl-L-lysine + succinate + CO2. Its pathway is amine and polyamine biosynthesis; carnitine biosynthesis. Converts trimethyllysine (TML) into hydroxytrimethyllysine (HTML). The protein is Trimethyllysine dioxygenase, mitochondrial (TMLHE) of Gallus gallus (Chicken).